A 322-amino-acid polypeptide reads, in one-letter code: HPr kinase/phosphorylase (322 aa).

Residues histidine 146 and lysine 167 contribute to the active site. Residue 161 to 168 (GDSGLGKS) participates in ATP binding. Serine 168 is a binding site for Mg(2+). Aspartate 185 serves as the catalytic Proton acceptor; for phosphorylation activity. Proton donor; for dephosphorylation activity. The segment at 209–218 (LEVRGLGLLD) is important for the catalytic mechanism of both phosphorylation and dephosphorylation. Glutamate 210 contributes to the Mg(2+) binding site. Residue arginine 250 is part of the active site. The interval 271–276 (QVAAGR) is important for the catalytic mechanism of dephosphorylation.

Belongs to the HPrK/P family. As to quaternary structure, homohexamer. Mg(2+) serves as cofactor.

The enzyme catalyses [HPr protein]-L-serine + ATP = [HPr protein]-O-phospho-L-serine + ADP + H(+). It carries out the reaction [HPr protein]-O-phospho-L-serine + phosphate + H(+) = [HPr protein]-L-serine + diphosphate. Functionally, catalyzes the ATP- as well as the pyrophosphate-dependent phosphorylation of a specific serine residue in HPr, a phosphocarrier protein of the phosphoenolpyruvate-dependent sugar phosphotransferase system (PTS). HprK/P also catalyzes the pyrophosphate-producing, inorganic phosphate-dependent dephosphorylation (phosphorolysis) of seryl-phosphorylated HPr (P-Ser-HPr). This chain is HPr kinase/phosphorylase, found in Burkholderia mallei (strain NCTC 10247).